Consider the following 211-residue polypeptide: Large ribosomal subunit protein eL13 (211 aa).

An N6-acetyllysine modification is found at Lys16. Residues Ser52, Ser77, and Ser106 each carry the phosphoserine modification. Glycyl lysine isopeptide (Lys-Gly) (interchain with G-Cter in SUMO2) cross-links involve residues Lys123 and Lys145. Residue Lys174 forms a Glycyl lysine isopeptide (Lys-Gly) (interchain with G-Cter in SUMO1); alternate linkage. Residues Lys174 and Lys177 each participate in a glycyl lysine isopeptide (Lys-Gly) (interchain with G-Cter in SUMO2); alternate cross-link. Lys177 is subject to N6-acetyllysine; alternate.

The protein belongs to the eukaryotic ribosomal protein eL13 family. As to quaternary structure, component of the 60S large ribosomal subunit (LSU).

It localises to the cytoplasm. In terms of biological role, component of the ribosome, a large ribonucleoprotein complex responsible for the synthesis of proteins in the cell. The small ribosomal subunit (SSU) binds messenger RNAs (mRNAs) and translates the encoded message by selecting cognate aminoacyl-transfer RNA (tRNA) molecules. The large subunit (LSU) contains the ribosomal catalytic site termed the peptidyl transferase center (PTC), which catalyzes the formation of peptide bonds, thereby polymerizing the amino acids delivered by tRNAs into a polypeptide chain. The nascent polypeptides leave the ribosome through a tunnel in the LSU and interact with protein factors that function in enzymatic processing, targeting, and the membrane insertion of nascent chains at the exit of the ribosomal tunnel. As part of the LSU, it is probably required for its formation and the maturation of rRNAs. Plays a role in bone development. The protein is Large ribosomal subunit protein eL13 (RPL13) of Cricetulus griseus (Chinese hamster).